The following is a 95-amino-acid chain: Aspartyl/glutamyl-tRNA(Asn/Gln) amidotransferase subunit C (95 aa).

It belongs to the GatC family. In terms of assembly, heterotrimer of A, B and C subunits.

It carries out the reaction L-glutamyl-tRNA(Gln) + L-glutamine + ATP + H2O = L-glutaminyl-tRNA(Gln) + L-glutamate + ADP + phosphate + H(+). The enzyme catalyses L-aspartyl-tRNA(Asn) + L-glutamine + ATP + H2O = L-asparaginyl-tRNA(Asn) + L-glutamate + ADP + phosphate + 2 H(+). Its function is as follows. Allows the formation of correctly charged Asn-tRNA(Asn) or Gln-tRNA(Gln) through the transamidation of misacylated Asp-tRNA(Asn) or Glu-tRNA(Gln) in organisms which lack either or both of asparaginyl-tRNA or glutaminyl-tRNA synthetases. The reaction takes place in the presence of glutamine and ATP through an activated phospho-Asp-tRNA(Asn) or phospho-Glu-tRNA(Gln). This chain is Aspartyl/glutamyl-tRNA(Asn/Gln) amidotransferase subunit C, found in Beijerinckia indica subsp. indica (strain ATCC 9039 / DSM 1715 / NCIMB 8712).